A 475-amino-acid polypeptide reads, in one-letter code: Sulfate adenylyltransferase subunit 1 (475 aa).

The region spanning 25–241 is the tr-type G domain; sequence KSLLRFLTCG…LENIEIQRVV (217 aa). Residues 34–41 are G1; the sequence is GSVDDGKS. A GTP-binding site is contributed by 34-41; the sequence is GSVDDGKS. Residues 92 to 96 form a G2 region; that stretch reads GITID. The interval 113-116 is G3; that stretch reads DTPG. GTP is bound by residues 113 to 117 and 168 to 171; these read DTPGH and NKMD. Residues 168–171 are G4; that stretch reads NKMD. The interval 206 to 208 is G5; that stretch reads SAL.

Belongs to the TRAFAC class translation factor GTPase superfamily. Classic translation factor GTPase family. CysN/NodQ subfamily. In terms of assembly, heterodimer composed of CysD, the smaller subunit, and CysN.

The catalysed reaction is sulfate + ATP + H(+) = adenosine 5'-phosphosulfate + diphosphate. It functions in the pathway sulfur metabolism; hydrogen sulfide biosynthesis; sulfite from sulfate: step 1/3. In terms of biological role, with CysD forms the ATP sulfurylase (ATPS) that catalyzes the adenylation of sulfate producing adenosine 5'-phosphosulfate (APS) and diphosphate, the first enzymatic step in sulfur assimilation pathway. APS synthesis involves the formation of a high-energy phosphoric-sulfuric acid anhydride bond driven by GTP hydrolysis by CysN coupled to ATP hydrolysis by CysD. This Cronobacter sakazakii (strain ATCC BAA-894) (Enterobacter sakazakii) protein is Sulfate adenylyltransferase subunit 1.